A 445-amino-acid chain; its full sequence is MSKKLYIKTYGCQMNVYDSVKMQDLLYPFGYEPTENIEEADVIILNTCHIREKAAEKTYSELGRIKKLQDTRTKQGLSSAIIVVAGCVAQAEGEEIFTRTPYVDIVVGPQSYYNLPELISKVVRHEKHLIDLDFVEEAKFDQLPEQLYPQGTSAFISVQEGCDKFCTFCVVPYTRGAEFSRNVEQVYREALKVVSSGAKEIMLLGQNVNAYHGKGPADKIFSLADLLKHLAQIPNLERLRYTTSHPIDMNNDLIKLYGTEPKLMPFLHLPVQSGSNKILKAMNRKHDREYYFDIINRLREARPDIVLSSDFIVGFPGETDEDFEDTLDLVRRVKYGQCYSFKYSPRPGTPGATRTDQIPEHIKSERLTILQQELMAQQLAFNTSCVGSTMKVLFDRNGKFDDQIIGKTPYMQSVYIQNPNKSLLGKISDVKITKASLNSLTGEIL.

The MTTase N-terminal domain occupies 3–124 (KKLYIKTYGC…LPELISKVVR (122 aa)). Residues cysteine 12, cysteine 48, cysteine 87, cysteine 162, cysteine 166, and cysteine 169 each contribute to the [4Fe-4S] cluster site. The Radical SAM core domain occupies 148 to 380 (YPQGTSAFIS…QQELMAQQLA (233 aa)). One can recognise a TRAM domain in the interval 383 to 445 (TSCVGSTMKV…SLNSLTGEIL (63 aa)).

Belongs to the methylthiotransferase family. MiaB subfamily. Monomer. [4Fe-4S] cluster is required as a cofactor.

The protein resides in the cytoplasm. It catalyses the reaction N(6)-dimethylallyladenosine(37) in tRNA + (sulfur carrier)-SH + AH2 + 2 S-adenosyl-L-methionine = 2-methylsulfanyl-N(6)-dimethylallyladenosine(37) in tRNA + (sulfur carrier)-H + 5'-deoxyadenosine + L-methionine + A + S-adenosyl-L-homocysteine + 2 H(+). In terms of biological role, catalyzes the methylthiolation of N6-(dimethylallyl)adenosine (i(6)A), leading to the formation of 2-methylthio-N6-(dimethylallyl)adenosine (ms(2)i(6)A) at position 37 in tRNAs that read codons beginning with uridine. The chain is tRNA-2-methylthio-N(6)-dimethylallyladenosine synthase from Rickettsia conorii (strain ATCC VR-613 / Malish 7).